A 422-amino-acid chain; its full sequence is tRNA hydroxylation protein P (422 aa).

Positions 1–58 (MNQVELLSPAGNLKKLKIALNYGADAVYGGVSHFSLRNRAGKEFTLETFKEGIDYAHA) are cleaved as a signal peptide.

Belongs to the peptidase U32 family.

Its function is as follows. Involved in prephenate-dependent formation of 5-hydroxyuridine (ho5U) modification at position 34 in tRNAs, the first step in 5-carboxymethoxyuridine (cmo5U) biosynthesis. This chain is tRNA hydroxylation protein P, found in Helicobacter pylori (strain J99 / ATCC 700824) (Campylobacter pylori J99).